The following is a 368-amino-acid chain: tRNA-specific 2-thiouridylase MnmA (368 aa).

ATP-binding positions include 14–21 (AMSGGVDS) and L40. C108 serves as the catalytic Nucleophile. A disulfide bridge links C108 with C204. G132 contacts ATP. The segment at 154-156 (KDQ) is interaction with tRNA. The active-site Cysteine persulfide intermediate is the C204.

The protein belongs to the MnmA/TRMU family.

It localises to the cytoplasm. The catalysed reaction is S-sulfanyl-L-cysteinyl-[protein] + uridine(34) in tRNA + AH2 + ATP = 2-thiouridine(34) in tRNA + L-cysteinyl-[protein] + A + AMP + diphosphate + H(+). Catalyzes the 2-thiolation of uridine at the wobble position (U34) of tRNA, leading to the formation of s(2)U34. In Rickettsia canadensis (strain McKiel), this protein is tRNA-specific 2-thiouridylase MnmA.